A 196-amino-acid polypeptide reads, in one-letter code: Probable malonic semialdehyde reductase RutE (196 aa).

Belongs to the nitroreductase family. HadB/RutE subfamily. FMN is required as a cofactor.

It carries out the reaction 3-hydroxypropanoate + NADP(+) = 3-oxopropanoate + NADPH + H(+). Its function is as follows. May reduce toxic product malonic semialdehyde to 3-hydroxypropionic acid, which is excreted. The polypeptide is Probable malonic semialdehyde reductase RutE (Klebsiella pneumoniae subsp. pneumoniae (strain ATCC 700721 / MGH 78578)).